Here is a 163-residue protein sequence, read N- to C-terminus: Neurotrophin-3 (163 aa).

Residues 1 to 3 form the signal peptide; sequence IQS. Residues 4–119 constitute a propeptide that is removed on maturation; that stretch reads TSMDQGILTE…VLNRTSRRKR (116 aa). Residue Asn112 is glycosylated (N-linked (GlcNAc...) asparagine).

This sequence belongs to the NGF-beta family.

It localises to the secreted. In terms of biological role, seems to promote the survival of visceral and proprioceptive sensory neurons. This chain is Neurotrophin-3 (NTF3), found in Eryx conicus (Rough-scaled sand boa).